Here is a 341-residue protein sequence, read N- to C-terminus: L-threonine 3-dehydrogenase (341 aa).

Cys38 contributes to the Zn(2+) binding site. Residues Thr40 and His43 each act as charge relay system in the active site. His63, Glu64, Cys93, Cys96, Cys99, and Cys107 together coordinate Zn(2+). Residues Ile175, Asp195, Arg200, 262 to 264 (LGI), and 286 to 287 (IY) each bind NAD(+).

This sequence belongs to the zinc-containing alcohol dehydrogenase family. Homotetramer. Zn(2+) is required as a cofactor.

The protein resides in the cytoplasm. The enzyme catalyses L-threonine + NAD(+) = (2S)-2-amino-3-oxobutanoate + NADH + H(+). It participates in amino-acid degradation; L-threonine degradation via oxydo-reductase pathway; glycine from L-threonine: step 1/2. Functionally, catalyzes the NAD(+)-dependent oxidation of L-threonine to 2-amino-3-ketobutyrate. The chain is L-threonine 3-dehydrogenase from Chromobacterium violaceum (strain ATCC 12472 / DSM 30191 / JCM 1249 / CCUG 213 / NBRC 12614 / NCIMB 9131 / NCTC 9757 / MK).